The following is an 875-amino-acid chain: ATP-dependent helicase Lhr-Core (875 aa).

Positions 35, 58, 59, 173, 174, 355, 372, and 375 each coordinate ATP. Residues 39 to 230 (IPLIKQNYNV…FLVGKDREYR (192 aa)) form the Helicase ATP-binding domain. The DEIH box motif lies at 173–176 (DEIH). The Helicase C-terminal domain occupies 247 to 419 (PVKDLVHSSE…SIHIPKNPLD (173 aa)). The WH domain stretch occupies residues 420-506 (VLSQIIVSAS…IFYTNSGTIP (87 aa)). The domain 4 stretch occupies residues 507-875 (DEAMISVVTE…VNIELEYTSV (369 aa)).

The protein belongs to the Lhr helicase family. Lhr-Core subfamily. In terms of assembly, monomer and homodimer. The monomeric form has helicase, ATPase and strand annealing activities, while the dimeric form only has ATPAse and strand annealing activities. Interacts with DNA topoisomerase 3 (topA).

The enzyme catalyses Couples ATP hydrolysis with the unwinding of duplex DNA by translocating in the 3'-5' direction.. It catalyses the reaction ATP + H2O = ADP + phosphate + H(+). Its activity is regulated as follows. DNA topoisomerase 3 (topA) inhibits helicase activity on Holliday junctions (HJ) but has no effect on ATPase activity. Its function is as follows. DNA helicase that translocates in a 3'-5' direction on single-stranded (ss)DNA, probably involved in DNA repair. Unwinds DNA in a 3'-5' direction, unwinding is ATP-dependent, acts preferentially on fork and 3'-tailed DNA; bubble and blunt-ended double-stranded (ds)DNA are not substrates. Has winding and unwinding activity, unwinds Holliday junction (HJ) DNA in the presence of ATP, the main product is forked DNA, single-stranded binding protein (SSB) does not stimulate activity. Anneals complementary oligonucleotides in an ATP-independent manner to form HJ and fork structures, thus can perform strand exchange. Preferentially binds HJ, forked and ssDNA, dsDNA is bound less well. LhrC-Core (Hel112) inhibits the exonuclease activity of the HerA-NurA complex on ss- and dsDNA, has no effect on ssDNA nicking by NurA; HerA-NurA are involved in DNA end-resection during DNA double-strand break repair. This chain is ATP-dependent helicase Lhr-Core, found in Saccharolobus solfataricus (strain ATCC 35092 / DSM 1617 / JCM 11322 / P2) (Sulfolobus solfataricus).